Consider the following 210-residue polypeptide: Isochorismatase domain-containing protein 2B (210 aa).

Lys178 bears the N6-succinyllysine mark.

It belongs to the isochorismatase family. In terms of assembly, interacts with CDKN2A. Ubiquitous. Expressed predominantly in uterus, stomach and urinary tract.

It localises to the cytoplasm. It is found in the nucleus. In Mus musculus (Mouse), this protein is Isochorismatase domain-containing protein 2B (Isoc2b).